Consider the following 116-residue polypeptide: Small ribosomal subunit protein bS16 (116 aa).

This sequence belongs to the bacterial ribosomal protein bS16 family.

This Chlamydia trachomatis serovar L2 (strain ATCC VR-902B / DSM 19102 / 434/Bu) protein is Small ribosomal subunit protein bS16.